We begin with the raw amino-acid sequence, 424 residues long: Serine--tRNA ligase (424 aa).

230–232 (TAE) is an L-serine binding site. 261-263 (RSE) provides a ligand contact to ATP. E284 is a binding site for L-serine. 348-351 (EISS) is a binding site for ATP. L-serine is bound at residue S384.

This sequence belongs to the class-II aminoacyl-tRNA synthetase family. Type-1 seryl-tRNA synthetase subfamily. As to quaternary structure, homodimer. The tRNA molecule binds across the dimer.

Its subcellular location is the cytoplasm. The catalysed reaction is tRNA(Ser) + L-serine + ATP = L-seryl-tRNA(Ser) + AMP + diphosphate + H(+). The enzyme catalyses tRNA(Sec) + L-serine + ATP = L-seryl-tRNA(Sec) + AMP + diphosphate + H(+). Its pathway is aminoacyl-tRNA biosynthesis; selenocysteinyl-tRNA(Sec) biosynthesis; L-seryl-tRNA(Sec) from L-serine and tRNA(Sec): step 1/1. Its function is as follows. Catalyzes the attachment of serine to tRNA(Ser). Is also able to aminoacylate tRNA(Sec) with serine, to form the misacylated tRNA L-seryl-tRNA(Sec), which will be further converted into selenocysteinyl-tRNA(Sec). The chain is Serine--tRNA ligase from Nitratidesulfovibrio vulgaris (strain ATCC 29579 / DSM 644 / CCUG 34227 / NCIMB 8303 / VKM B-1760 / Hildenborough) (Desulfovibrio vulgaris).